We begin with the raw amino-acid sequence, 383 residues long: L-Ala-D/L-Glu epimerase (383 aa).

Substrate is bound by residues Arg-68, Tyr-94, and 198–200 (KVK). The Mg(2+) site is built by Asp-224, Glu-251, and Asp-276. Substrate contacts are provided by residues Lys-298, 326–328 (CMT), and 348–350 (DLD).

Belongs to the mandelate racemase/muconate lactonizing enzyme family. Requires Mg(2+) as cofactor.

It carries out the reaction L-alanyl-L-glutamate = L-alanyl-D-glutamate. Catalyzes the epimerization of L-Ala-D-Glu to L-Ala-L-Glu and may play a role in the metabolism of the murein peptide, of which L-Ala-D-Glu is a component. Is also able to catalyze the epimerization of L-Ala-D-Asp, L-Ala-L-Glu, L-Ala-L-Ser, L-Ala-L-Pro, L-Ala-L-L-Val, L-Ala-L-Thr, L-Ala-L-Leu, L-Ala-L-Ile and L-Gly-L-Glu (in vitro). This chain is L-Ala-D/L-Glu epimerase, found in Bacteroides thetaiotaomicron (strain ATCC 29148 / DSM 2079 / JCM 5827 / CCUG 10774 / NCTC 10582 / VPI-5482 / E50).